The following is a 489-amino-acid chain: Glucose-6-phosphate 1-dehydrogenase (489 aa).

NADP(+) contacts are provided by residues 15-22 (GATGDLAK), R49, 86-87 (DV), and K149. The substrate site is built by H179, K183, E217, and D236. The active-site Proton acceptor is the H241. Substrate contacts are provided by K341 and K346.

This sequence belongs to the glucose-6-phosphate dehydrogenase family.

It carries out the reaction D-glucose 6-phosphate + NADP(+) = 6-phospho-D-glucono-1,5-lactone + NADPH + H(+). Its pathway is carbohydrate degradation; pentose phosphate pathway; D-ribulose 5-phosphate from D-glucose 6-phosphate (oxidative stage): step 1/3. In terms of biological role, catalyzes the oxidation of glucose 6-phosphate to 6-phosphogluconolactone. In Bacillus subtilis (strain 168), this protein is Glucose-6-phosphate 1-dehydrogenase.